Consider the following 411-residue polypeptide: Serine hydroxymethyltransferase (411 aa).

Residues L117 and G121–L123 each bind (6S)-5,6,7,8-tetrahydrofolate. K226 is subject to N6-(pyridoxal phosphate)lysine.

Belongs to the SHMT family. As to quaternary structure, homodimer. Pyridoxal 5'-phosphate is required as a cofactor.

It is found in the cytoplasm. It carries out the reaction (6R)-5,10-methylene-5,6,7,8-tetrahydrofolate + glycine + H2O = (6S)-5,6,7,8-tetrahydrofolate + L-serine. It functions in the pathway one-carbon metabolism; tetrahydrofolate interconversion. It participates in amino-acid biosynthesis; glycine biosynthesis; glycine from L-serine: step 1/1. In terms of biological role, catalyzes the reversible interconversion of serine and glycine with tetrahydrofolate (THF) serving as the one-carbon carrier. This reaction serves as the major source of one-carbon groups required for the biosynthesis of purines, thymidylate, methionine, and other important biomolecules. Also exhibits THF-independent aldolase activity toward beta-hydroxyamino acids, producing glycine and aldehydes, via a retro-aldol mechanism. The polypeptide is Serine hydroxymethyltransferase (Syntrophobacter fumaroxidans (strain DSM 10017 / MPOB)).